Consider the following 227-residue polypeptide: Urease accessory protein UreF (227 aa).

Belongs to the UreF family. UreD, UreF and UreG form a complex that acts as a GTP-hydrolysis-dependent molecular chaperone, activating the urease apoprotein by helping to assemble the nickel containing metallocenter of UreC. The UreE protein probably delivers the nickel.

It is found in the cytoplasm. Required for maturation of urease via the functional incorporation of the urease nickel metallocenter. This chain is Urease accessory protein UreF, found in Actinobacillus pleuropneumoniae (Haemophilus pleuropneumoniae).